A 284-amino-acid polypeptide reads, in one-letter code: Nicotinate-nucleotide pyrophosphorylase [carboxylating] (284 aa).

Substrate-binding positions include arginine 104, 137 to 139 (TRK), arginine 161, lysine 171, glutamate 200, aspartate 221, 247 to 249 (SGG), and 268 to 270 (VGA).

Belongs to the NadC/ModD family. Hexamer formed by 3 homodimers.

It catalyses the reaction nicotinate beta-D-ribonucleotide + CO2 + diphosphate = quinolinate + 5-phospho-alpha-D-ribose 1-diphosphate + 2 H(+). It functions in the pathway cofactor biosynthesis; NAD(+) biosynthesis; nicotinate D-ribonucleotide from quinolinate: step 1/1. Functionally, involved in the catabolism of quinolinic acid (QA). In Mycobacterium leprae (strain TN), this protein is Nicotinate-nucleotide pyrophosphorylase [carboxylating] (nadC).